The chain runs to 185 residues: p53 apoptosis effector related to PMP-22 (185 aa).

The next 4 helical transmembrane spans lie at 13–33, 74–94, 105–125, and 143–163; these read WILPMLLLFAIIFDIIAIAAQ, VAALMIIGLIILIFAFIISLV, LPFIGLLLILAVIVQIIALII, and WAYGFGWGATILTLGCAILFC.

The protein belongs to the TMEM47 family.

The protein resides in the cell junction. Its subcellular location is the desmosome. The protein localises to the cell membrane. It localises to the cytoplasm. In terms of biological role, component of intercellular desmosome junctions. Positively regulates apoptosis in the early-stage embryo in response to UV irradiation, this is partially dependent on tp53 activation. Required for the survival of cell populations in the developing notochord and skin, therefore required for normal embryogenesis beyond 30 hpf. Acts as a positive regulator of endothelial cell apoptosis in response to blood flow-derived shear stress. The chain is p53 apoptosis effector related to PMP-22 from Danio rerio (Zebrafish).